Consider the following 398-residue polypeptide: Serpin-Z1A (398 aa).

Residues 343-367 are RCL; it reads GTEAAASTAIKMVLQQARPPSVMDF.

The protein belongs to the serpin family.

Inhibits chymotrypsin and cathepsin G in vitro. This is Serpin-Z1A (WZCI) from Triticum aestivum (Wheat).